The chain runs to 795 residues: Mitochondrial inner membrane m-AAA protease component paraplegin (795 aa).

A mitochondrion-targeting transit peptide spans 1-43 (MAVLLLLLRALRRGPGPGPRPLWGPGPAWSPGFPARPGRGRPY). Positions 44 to 105 (MASRPPGDLA…GGTFYFNTSR (62 aa)) are cleaved as a propeptide — removed in mature form. The Mitochondrial matrix portion of the chain corresponds to 106–144 (LKQKNKEKDKSKGKAPEEDEEERRRRERDDQMYRERLRT). Positions 108-133 (QKNKEKDKSKGKAPEEDEEERRRRER) are disordered. A compositionally biased stretch (basic and acidic residues) spans 109–133 (KNKEKDKSKGKAPEEDEEERRRRER). The helical transmembrane segment at 145-165 (LLVIAVVMSLLNALSTSGGSI) threads the bilayer. The Mitochondrial intermembrane portion of the chain corresponds to 166 to 248 (SWNDFVHEML…DRIPVSYKRT (83 aa)). A helical membrane pass occupies residues 249–269 (GFFGNALYSVGMTAVGLAILW). The Mitochondrial matrix segment spans residues 270 to 795 (YVFRLAGMTG…LGGEEPTWPK (526 aa)). ATP contacts are provided by Ala312, Gly352, Cys353, Gly354, Lys355, Thr356, and Leu357. Tyr505 is modified (3'-nitrotyrosine). A Zn(2+)-binding site is contributed by His574. Glu575 is an active-site residue. Residues His578 and Asp650 each contribute to the Zn(2+) site. The segment at 701–795 (HEARLLVAKA…LGGEEPTWPK (95 aa)) is interaction with PPIF. Residues 751–795 (PHGPKKMIAPQRWIDAQREKQDLGEEETEETQQPPLGGEEPTWPK) are disordered.

The protein in the N-terminal section; belongs to the AAA ATPase family. It in the C-terminal section; belongs to the peptidase M41 family. Forms heterooligomers with AFG3L2; the m-AAA protease is composed of heterohexamers of AFG3L2 and SPG7. Component of the mitochondrial permeability transition pore complex (mPTPC), at least composed of SPG7, VDAC1 and PPIF. Interacts with MAIP1. Requires Zn(2+) as cofactor. Upon import into the mitochondrion, the N-terminal transit peptide is cleaved by the mitochondrial-processing peptidase (MPP) to generate an intermediate form which undergoes a second proteolytic cleavage mediated by proteases AFG3L2 removing an additional N-terminal fragment to generate the proteolytically active mature form. As to expression, ubiquitous.

The protein localises to the mitochondrion inner membrane. It carries out the reaction ATP + H2O = ADP + phosphate + H(+). In terms of biological role, catalytic component of the m-AAA protease, a protease that plays a key role in proteostasis of inner mitochondrial membrane proteins, and which is essential for axonal and neuron development. SPG7 possesses both ATPase and protease activities: the ATPase activity is required to unfold substrates, threading them into the internal proteolytic cavity for hydrolysis into small peptide fragments. The m-AAA protease exerts a dual role in the mitochondrial inner membrane: it mediates the processing of specific regulatory proteins and ensures protein quality control by degrading misfolded polypeptides. Mediates protein maturation of the mitochondrial ribosomal subunit MRPL32/bL32m by catalyzing the cleavage of the presequence of MRPL32/bL32m prior to assembly into the mitochondrial ribosome. Acts as a regulator of calcium in neurons by mediating degradation of SMDT1/EMRE before its assembly with the uniporter complex, limiting the availability of SMDT1/EMRE for MCU assembly and promoting efficient assembly of gatekeeper subunits with MCU. Also regulates mitochondrial calcium by catalyzing degradation of MCU. Plays a role in the formation and regulation of the mitochondrial permeability transition pore (mPTP) and its proteolytic activity is dispensable for this function. The sequence is that of Mitochondrial inner membrane m-AAA protease component paraplegin from Homo sapiens (Human).